A 143-amino-acid chain; its full sequence is MAKKVTGQVKLQIAAGKATPAPPVGPALGQAQINIMEFCKQFNAKTASKDLEGFTIPVVITVYNDRSFTFVTKTPPASDLLRKAAGVAKGSGVPNKDKVGKVTEKQVVEIAKQKMPDLNAASVEAAINSIKGTARSMGIDIVP.

The protein belongs to the universal ribosomal protein uL11 family. Part of the ribosomal stalk of the 50S ribosomal subunit. Interacts with L10 and the large rRNA to form the base of the stalk. L10 forms an elongated spine to which L12 dimers bind in a sequential fashion forming a multimeric L10(L12)X complex. In terms of processing, one or more lysine residues are methylated.

In terms of biological role, forms part of the ribosomal stalk which helps the ribosome interact with GTP-bound translation factors. The polypeptide is Large ribosomal subunit protein uL11 (Koribacter versatilis (strain Ellin345)).